The sequence spans 310 residues: Acetyl-coenzyme A carboxylase carboxyl transferase subunit alpha (310 aa).

The CoA carboxyltransferase C-terminal domain maps to 31–285 (SFERELRIIN…KQKILRRLKQ (255 aa)).

This sequence belongs to the AccA family. As to quaternary structure, acetyl-CoA carboxylase is a heterohexamer composed of biotin carboxyl carrier protein (accB), biotin carboxylase (accC) and two subunits each of ACCase subunit alpha (accA) and ACCase subunit beta (accD).

Its subcellular location is the plastid. The protein resides in the chloroplast. It carries out the reaction N(6)-carboxybiotinyl-L-lysyl-[protein] + acetyl-CoA = N(6)-biotinyl-L-lysyl-[protein] + malonyl-CoA. The protein operates within lipid metabolism; malonyl-CoA biosynthesis; malonyl-CoA from acetyl-CoA: step 1/1. Component of the acetyl coenzyme A carboxylase (ACC) complex. First, biotin carboxylase catalyzes the carboxylation of biotin on its carrier protein (BCCP) and then the CO(2) group is transferred by the carboxyltransferase to acetyl-CoA to form malonyl-CoA. The sequence is that of Acetyl-coenzyme A carboxylase carboxyl transferase subunit alpha from Cyanidioschyzon merolae (strain NIES-3377 / 10D) (Unicellular red alga).